We begin with the raw amino-acid sequence, 642 residues long: MNSVIVEDDPTLIHRFLFHAENKPDALAYCFLEDGEIDRQRVSFRDLREMSTVVARIFSSVCQTQEPVLLALPNDCRFIVGFLATQLESLIAIPVYPPEGKHKRARFTSIVHSSGARVLLTSSEYIKRCSNYFSTLADDGVTVIDIDSLLNGLLLPLPQGVSDVNGTLVPGEVSTKATGLQGAESSVESYNVESYIEPSAKPDDISFVQYTSGSTGEPKGVVITHANLIENQRMIQRSFCHDESTVFGSWLPFYHDMGLVGNILQPLYLGIPCYFMAPIAFIQKPFRWLALISKYRVTTSGGPDFGYALCAKRVKDAQIASLDLTSWEVAFNGSEPVKLATITRFHAKFSSCGFSAKSMYPVYGMAEATLFISGGSRHNEPQALQIDSAELQRGRIIGAAENENSKSLVCCGDDIDRQQVCIVDPASRLPVADGSVGEIWVTGAHVAKSYFRNPELSRSTLAATFDSASDSNADQSQCKYLRTGDLGAVVSGDLYITGRLKDLIVMRGLNHHPHDIEATLQQLDASLGEYACACFTDNIGDVDFLTVVQEIAPTYAKSGSLEDLADKMCEELNQEHGLTLDSIYFVRPFTIPKTTSGKLQRSAMRSRLAENAVTPIWRYLSPRIAPLVTQNGTLEERVSYVR.

It belongs to the ATP-dependent AMP-binding enzyme family.

The catalysed reaction is a medium-chain fatty acid + holo-[ACP] + ATP = a medium-chain fatty acyl-[ACP] + AMP + diphosphate. It carries out the reaction a medium-chain fatty acid + ATP + H(+) = a medium-chain fatty acyl-AMP + diphosphate. The enzyme catalyses a medium-chain fatty acyl-AMP + holo-[ACP] = a medium-chain fatty acyl-[ACP] + AMP + H(+). It catalyses the reaction decanoate + holo-[ACP] + ATP = decanoyl-[ACP] + AMP + diphosphate. The catalysed reaction is decanoate + ATP + H(+) = decanoyl-AMP + diphosphate. It carries out the reaction decanoyl-AMP + holo-[ACP] = decanoyl-[ACP] + AMP + H(+). Its function is as follows. Ligase likely involved in the biosynthesis of a polyyne metabolite. Catalyzes the activation of decanoic acid, followed by the loading of the activated decanoic acid onto the acyl carrier protein TtuC. Decanoic acid is the preferred substrate, but it can also use 10-undecenoic acid and lauric acid. Nonanoic acid and 7-octenoic acid are only weakly activated. The protein is Medium-chain-fatty-acid--[acyl-carrier-protein] ligase TtuA of Teredinibacter turnerae (strain ATCC 39867 / T7901).